The sequence spans 532 residues: CTP synthase (532 aa).

The interval 1–267 is amidoligase domain; sequence MTKYIFVTGG…DDIVLEHLQL (267 aa). Ser13 lines the CTP pocket. Ser13 serves as a coordination point for UTP. Residue 14–19 participates in ATP binding; sequence SIGKGI. Tyr54 provides a ligand contact to L-glutamine. Asp71 is an ATP binding site. Mg(2+)-binding residues include Asp71 and Glu141. CTP contacts are provided by residues 148–150, 188–193, and Lys224; these read DIE and KTKPTQ. UTP-binding positions include 188–193 and Lys224; that span reads KTKPTQ. The region spanning 292–532 is the Glutamine amidotransferase type-1 domain; it reads RIGLVGKYVS…DFVGAALNNK (241 aa). Gly354 is a binding site for L-glutamine. Cys381 acts as the Nucleophile; for glutamine hydrolysis in catalysis. Residues 382–385, Glu405, and Arg462 each bind L-glutamine; that span reads LGMQ. Catalysis depends on residues His507 and Glu509.

It belongs to the CTP synthase family. Homotetramer.

The enzyme catalyses UTP + L-glutamine + ATP + H2O = CTP + L-glutamate + ADP + phosphate + 2 H(+). It carries out the reaction L-glutamine + H2O = L-glutamate + NH4(+). The catalysed reaction is UTP + NH4(+) + ATP = CTP + ADP + phosphate + 2 H(+). Its pathway is pyrimidine metabolism; CTP biosynthesis via de novo pathway; CTP from UDP: step 2/2. Its activity is regulated as follows. Allosterically activated by GTP, when glutamine is the substrate; GTP has no effect on the reaction when ammonia is the substrate. The allosteric effector GTP functions by stabilizing the protein conformation that binds the tetrahedral intermediate(s) formed during glutamine hydrolysis. Inhibited by the product CTP, via allosteric rather than competitive inhibition. Functionally, catalyzes the ATP-dependent amination of UTP to CTP with either L-glutamine or ammonia as the source of nitrogen. Regulates intracellular CTP levels through interactions with the four ribonucleotide triphosphates. The chain is CTP synthase from Listeria monocytogenes serotype 4b (strain F2365).